A 208-amino-acid chain; its full sequence is dITP/XTP pyrophosphatase (208 aa).

11 to 16 (TGNAKK) contacts substrate. The active-site Proton acceptor is aspartate 73. Mg(2+) is bound at residue aspartate 73. Substrate-binding positions include serine 74, 157 to 160 (FGYD), lysine 180, and 185 to 186 (HR).

This sequence belongs to the HAM1 NTPase family. Homodimer. Mg(2+) serves as cofactor.

It carries out the reaction XTP + H2O = XMP + diphosphate + H(+). It catalyses the reaction dITP + H2O = dIMP + diphosphate + H(+). The enzyme catalyses ITP + H2O = IMP + diphosphate + H(+). Pyrophosphatase that catalyzes the hydrolysis of nucleoside triphosphates to their monophosphate derivatives, with a high preference for the non-canonical purine nucleotides XTP (xanthosine triphosphate), dITP (deoxyinosine triphosphate) and ITP. Seems to function as a house-cleaning enzyme that removes non-canonical purine nucleotides from the nucleotide pool, thus preventing their incorporation into DNA/RNA and avoiding chromosomal lesions. This Rhodopirellula baltica (strain DSM 10527 / NCIMB 13988 / SH1) protein is dITP/XTP pyrophosphatase.